A 112-amino-acid chain; its full sequence is Integration host factor subunit alpha (112 aa).

It belongs to the bacterial histone-like protein family. Heterodimer of an alpha and a beta chain.

In terms of biological role, this protein is one of the two subunits of integration host factor, a specific DNA-binding protein that functions in genetic recombination as well as in transcriptional and translational control. In Rhizobium etli (strain ATCC 51251 / DSM 11541 / JCM 21823 / NBRC 15573 / CFN 42), this protein is Integration host factor subunit alpha.